Reading from the N-terminus, the 145-residue chain is Large ribosomal subunit protein uL13 (145 aa).

Belongs to the universal ribosomal protein uL13 family. In terms of assembly, part of the 50S ribosomal subunit.

Functionally, this protein is one of the early assembly proteins of the 50S ribosomal subunit, although it is not seen to bind rRNA by itself. It is important during the early stages of 50S assembly. The polypeptide is Large ribosomal subunit protein uL13 (Geobacillus thermodenitrificans (strain NG80-2)).